Reading from the N-terminus, the 105-residue chain is Large ribosomal subunit protein uL24 (105 aa).

The protein belongs to the universal ribosomal protein uL24 family. Part of the 50S ribosomal subunit.

One of two assembly initiator proteins, it binds directly to the 5'-end of the 23S rRNA, where it nucleates assembly of the 50S subunit. Functionally, one of the proteins that surrounds the polypeptide exit tunnel on the outside of the subunit. The protein is Large ribosomal subunit protein uL24 of Pseudothermotoga lettingae (strain ATCC BAA-301 / DSM 14385 / NBRC 107922 / TMO) (Thermotoga lettingae).